The sequence spans 130 residues: Nascent polypeptide-associated complex protein (130 aa).

The 69-residue stretch at Gly-6–Ile-74 folds into the NAC-A/B domain. Positions Pro-65 to Ile-91 are disordered. Residues Pro-78 to Ala-90 are compositionally biased toward acidic residues.

This sequence belongs to the NAC-alpha family. Homodimer. Interacts with the ribosome. Binds ribosomal RNA.

Functionally, contacts the emerging nascent chain on the ribosome. The protein is Nascent polypeptide-associated complex protein of Halobacterium salinarum (strain ATCC 700922 / JCM 11081 / NRC-1) (Halobacterium halobium).